The primary structure comprises 603 residues: UvrABC system protein C (603 aa).

A GIY-YIG domain is found at 15 to 92; the sequence is DQPGCYLMKD…IKKHDPRFNI (78 aa). The 36-residue stretch at 197 to 232 folds into the UVR domain; the sequence is KTVKNDLMKKMQVAAENMEFEKAGEFRDQINAIETT.

Belongs to the UvrC family. Interacts with UvrB in an incision complex.

The protein resides in the cytoplasm. In terms of biological role, the UvrABC repair system catalyzes the recognition and processing of DNA lesions. UvrC both incises the 5' and 3' sides of the lesion. The N-terminal half is responsible for the 3' incision and the C-terminal half is responsible for the 5' incision. This is UvrABC system protein C from Listeria welshimeri serovar 6b (strain ATCC 35897 / DSM 20650 / CCUG 15529 / CIP 8149 / NCTC 11857 / SLCC 5334 / V8).